A 940-amino-acid polypeptide reads, in one-letter code: Valine--tRNA ligase (940 aa).

The short motif at 47 to 57 is the 'HIGH' region element; sequence PNVTGILHMGH. The 'KMSKS' region signature appears at 564 to 568; the sequence is KLSKS. Lys567 contributes to the ATP binding site. The stretch at 872–938 forms a coiled coil; it reads PIEQITKEKN…LQSILDKLAS (67 aa).

It belongs to the class-I aminoacyl-tRNA synthetase family. ValS type 1 subfamily. In terms of assembly, monomer.

The protein resides in the cytoplasm. The enzyme catalyses tRNA(Val) + L-valine + ATP = L-valyl-tRNA(Val) + AMP + diphosphate. Functionally, catalyzes the attachment of valine to tRNA(Val). As ValRS can inadvertently accommodate and process structurally similar amino acids such as threonine, to avoid such errors, it has a 'posttransfer' editing activity that hydrolyzes mischarged Thr-tRNA(Val) in a tRNA-dependent manner. This chain is Valine--tRNA ligase, found in Chlamydia felis (strain Fe/C-56) (Chlamydophila felis).